The sequence spans 130 residues: Small ribosomal subunit protein uS11 (130 aa).

This sequence belongs to the universal ribosomal protein uS11 family. As to quaternary structure, part of the 30S ribosomal subunit. Interacts with proteins S7 and S18. Binds to IF-3.

Its function is as follows. Located on the platform of the 30S subunit, it bridges several disparate RNA helices of the 16S rRNA. Forms part of the Shine-Dalgarno cleft in the 70S ribosome. In Acidiphilium cryptum (strain JF-5), this protein is Small ribosomal subunit protein uS11.